Consider the following 735-residue polypeptide: Putative RNA polymerase II subunit B1 CTD phosphatase RPAP2 homolog (735 aa).

Residues 33-118 form an RTR1-type zinc finger; it reads AARKLMSRSD…LQEARTLEFD (86 aa). Cys-56, Cys-61, Cys-94, and Cys-98 together coordinate Zn(2+). Disordered stretches follow at residues 179 to 201, 349 to 374, and 519 to 538; these read VPFD…QEKH, GKNT…KSRK, and EHSE…WPNK. Residues 349-364 show a composition bias toward low complexity; sequence GKNTLSGSSSGSNTKG. Residues 519–530 show a composition bias toward acidic residues; sequence EHSEEEMTEEEP.

Belongs to the RPAP2 family.

Its subcellular location is the nucleus. The catalysed reaction is O-phospho-L-seryl-[protein] + H2O = L-seryl-[protein] + phosphate. It catalyses the reaction O-phospho-L-threonyl-[protein] + H2O = L-threonyl-[protein] + phosphate. Functionally, putative RNA polymerase II subunit B1 C-terminal domain (CTD) phosphatase involved in RNA polymerase II transcription regulation. The chain is Putative RNA polymerase II subunit B1 CTD phosphatase RPAP2 homolog from Arabidopsis thaliana (Mouse-ear cress).